The sequence spans 368 residues: Quinolinate synthase (368 aa).

Iminosuccinate-binding residues include His46 and Ser63. Residue Cys110 participates in [4Fe-4S] cluster binding. Iminosuccinate is bound by residues 141–143 and Ser162; that span reads YVN. Cys230 serves as a coordination point for [4Fe-4S] cluster. Iminosuccinate is bound by residues 256–258 and Thr273; that span reads HPE. Cys320 is a [4Fe-4S] cluster binding site.

It belongs to the quinolinate synthase family. Type 3 subfamily. Requires [4Fe-4S] cluster as cofactor.

The protein resides in the cytoplasm. The catalysed reaction is iminosuccinate + dihydroxyacetone phosphate = quinolinate + phosphate + 2 H2O + H(+). It participates in cofactor biosynthesis; NAD(+) biosynthesis; quinolinate from iminoaspartate: step 1/1. In terms of biological role, catalyzes the condensation of iminoaspartate with dihydroxyacetone phosphate to form quinolinate. This Bacillus cereus (strain G9842) protein is Quinolinate synthase.